We begin with the raw amino-acid sequence, 313 residues long: ADP-L-glycero-D-manno-heptose-6-epimerase (313 aa).

NADP(+)-binding positions include Phe-10–Ile-11, Asp-31–Asp-32, Arg-38, Lys-53, Glu-75–Ser-79, and Asn-92. Tyr-139 (proton acceptor) is an active-site residue. An NADP(+)-binding site is contributed by Lys-143. Residue Asn-168 participates in substrate binding. Residues Val-169 and Lys-177 each coordinate NADP(+). Lys-177 acts as the Proton acceptor in catalysis. Residues Lys-179, His-186, Phe-200 to Trp-203, Arg-213, and Tyr-277 each bind substrate.

This sequence belongs to the NAD(P)-dependent epimerase/dehydratase family. HldD subfamily. In terms of assembly, homopentamer. Requires NADP(+) as cofactor.

The catalysed reaction is ADP-D-glycero-beta-D-manno-heptose = ADP-L-glycero-beta-D-manno-heptose. It participates in nucleotide-sugar biosynthesis; ADP-L-glycero-beta-D-manno-heptose biosynthesis; ADP-L-glycero-beta-D-manno-heptose from D-glycero-beta-D-manno-heptose 7-phosphate: step 4/4. Functionally, catalyzes the interconversion between ADP-D-glycero-beta-D-manno-heptose and ADP-L-glycero-beta-D-manno-heptose via an epimerization at carbon 6 of the heptose. The sequence is that of ADP-L-glycero-D-manno-heptose-6-epimerase from Marinobacter nauticus (strain ATCC 700491 / DSM 11845 / VT8) (Marinobacter aquaeolei).